A 227-amino-acid polypeptide reads, in one-letter code: MKNIQGAVFDLYGTLYDVNSVAQVCEEVYSGHGDSISRLWRQKQLEYTWLRSLMGRYVNFEKATEDALRFTCTHLGLSLDDETHQRLSDAYLHLTPYADTADALRRLKAAGLPVGIISNGSHCSIEQVVTNSEMNWAFDQLISVEDVQVFKPDSRVYSLAEKRMGFPKENILFVSSNAWDASAASNFGFPVCWINRQNGAFDELDAKPTHVVRNLAEMSNWLVNSLD.

The active-site Nucleophile is Asp-10. An (S)-2-haloacid contacts are provided by residues 11–12 (LY), Arg-41, and 118–119 (SN). The interval 175–180 (SSNAWD) is important for catalytic activity.

Belongs to the HAD-like hydrolase superfamily. S-2-haloalkanoic acid dehalogenase family.

The enzyme catalyses an (S)-2-haloacid + H2O = a (2R)-2-hydroxycarboxylate + a halide anion + H(+). It carries out the reaction (S)-2-chloropropanoate + H2O = (R)-lactate + chloride + H(+). In terms of biological role, catalyzes the hydrolytic dehalogenation of small (S)-2-haloalkanoic acids to yield the corresponding (R)-2-hydroxyalkanoic acids. Acts on acids of short chain lengths, C(2) to C(4), with inversion of configuration at C-2. Active with 2-halogenated carboxylic acids and converts only the S-isomer (or L-isomer) of 2-chloropropionic acid with inversion of configuration to produce R-lactate (or D-isomer). The protein is (S)-2-haloacid dehalogenase (dhl VII) of Pseudomonas fluorescens.